The chain runs to 393 residues: Methyltransferase-like protein 22 (393 aa).

Positions 54 to 87 (WTDSGAEDSGPTDVSTEEMPPAGSGSGHSHEDLS) are disordered. Phosphoserine is present on S120.

The protein belongs to the methyltransferase superfamily. METTL22 family. Interacts with members of the heat shock protein 90 and 70 families; these proteins probably are methylation substrates.

Its subcellular location is the nucleus. The catalysed reaction is L-lysyl-[protein] + 3 S-adenosyl-L-methionine = N(6),N(6),N(6)-trimethyl-L-lysyl-[protein] + 3 S-adenosyl-L-homocysteine + 3 H(+). Its function is as follows. Protein N-lysine methyltransferase. Trimethylates KIN at Lys-135 (in vitro). The polypeptide is Methyltransferase-like protein 22 (Mettl22) (Mus musculus (Mouse)).